Consider the following 183-residue polypeptide: Ferredoxin-2, mitochondrial (183 aa).

The N-terminal 52 residues, Met-1–Pro-52, are a transit peptide targeting the mitochondrion. The segment at Phe-45 to Gly-65 is disordered. The 2Fe-2S ferredoxin-type domain maps to Val-68–Thr-170. [2Fe-2S] cluster-binding residues include Cys-105, Cys-111, Cys-114, and Cys-151.

Belongs to the adrenodoxin/putidaredoxin family. As to quaternary structure, component of the mitochondrial core iron-sulfur cluster (ISC) complex composed of NFS1, LYRM4, NDUFAB1, ISCU, FXN, and FDX2; this complex is a heterohexamer containing two copies of each monomer. Form a heterodimer complex with NFS1. Interacts (in both their reduced and oxidized states) with the cysteine desulfurase complex; this interaction stimulates cysteine desulfurase activity, and serves as a reductant for Fe-S cluster assembly. The cofactor is [2Fe-2S] cluster. Widely expressed, with highest levels in testis, kidney and brain (at protein level). Expressed in muscle (at protein level). Expressed in fibroblasts (at protein level).

The protein localises to the mitochondrion. The protein resides in the mitochondrion matrix. Functionally, electron donor, of the core iron-sulfur cluster (ISC) assembly complex, that acts to reduce the persulfide into sulfide during [2Fe-2S] clusters assembly on the scaffolding protein ISCU. The core iron-sulfur cluster (ISC) assembly complex is involved in the de novo synthesis of a [2Fe-2S] cluster, the first step of the mitochondrial iron-sulfur protein biogenesis. This process is initiated by the cysteine desulfurase complex (NFS1:LYRM4:NDUFAB1) that produces persulfide which is delivered on the scaffold protein ISCU in a FXN-dependent manner. Then this complex is stabilized by FDX2 which provides reducing equivalents to accomplish the [2Fe-2S] cluster assembly. Finally, the [2Fe-2S] cluster is transferred from ISCU to chaperone proteins, including HSCB, HSPA9 and GLRX5. Essential for coenzyme Q biosynthesis: together with FDXR, transfers the electrons required for the hydroxylation reaction performed by COQ6. This is Ferredoxin-2, mitochondrial from Homo sapiens (Human).